The sequence spans 76 residues: DNA-directed RNA polymerase subunit epsilon (76 aa).

It belongs to the RNA polymerase subunit epsilon family. In terms of assembly, RNAP is composed of a core of 2 alpha, a beta and a beta' subunit. The core is associated with a delta subunit, and at least one of epsilon or omega. When a sigma factor is associated with the core the holoenzyme is formed, which can initiate transcription.

It catalyses the reaction RNA(n) + a ribonucleoside 5'-triphosphate = RNA(n+1) + diphosphate. Functionally, a non-essential component of RNA polymerase (RNAP). The protein is DNA-directed RNA polymerase subunit epsilon of Lactococcus lactis subsp. cremoris (strain MG1363).